A 282-amino-acid chain; its full sequence is Phenylethanolamine N-methyltransferase (282 aa).

Ser7 carries the phosphoserine modification. Residues Tyr35, Tyr40, 79 to 80 (GS), Tyr85, Asp101, Asn106, 158 to 159 (DV), and Ala181 each bind S-adenosyl-L-methionine. 2 residues coordinate octopamine: Glu219 and Asp267.

It carries out the reaction phenylethanolamine + S-adenosyl-L-methionine = N-methylphenylethanolamine + S-adenosyl-L-homocysteine + H(+). It catalyses the reaction (R)-noradrenaline + S-adenosyl-L-methionine = (R)-adrenaline + S-adenosyl-L-homocysteine + H(+). The catalysed reaction is (R)-normetanephrine + S-adenosyl-L-methionine = (R)-metanephrine + S-adenosyl-L-homocysteine + H(+). The enzyme catalyses (R)-octopamine + S-adenosyl-L-methionine = (R)-synephrine + S-adenosyl-L-homocysteine + H(+). The protein operates within catecholamine biosynthesis; (R)-adrenaline biosynthesis; (R)-adrenaline from (R)-noradrenaline: step 1/1. With respect to regulation, inhibited by methyl methanethiosulfonate, phenylglyoxal, tetranitromethane and diethyl pyrocarbonate. Inhibited by 4-oxo-1,4-dihydro-quinoline-3,7-dicarboxylic acid, 4-(benzo[d][1,3]dioxol-5-ylamino)-4-oxobutanoic acid and 1,4-diaminonaphthalene-2,6-disulfonic acid. Functionally, catalyzes the transmethylation of nonepinephrine (noradrenaline) to form epinephrine (adrenaline), using S-adenosyl-L-methionine as the methyl donor. Other substrates include phenylethanolamine and octopamine. Also methylates normetanephrine. This chain is Phenylethanolamine N-methyltransferase (PNMT), found in Homo sapiens (Human).